The sequence spans 140 residues: Large ribosomal subunit protein uL14 (140 aa).

Serine 17 carries the phosphoserine modification. Tyrosine 38 carries the post-translational modification Phosphotyrosine.

It belongs to the universal ribosomal protein uL14 family. Component of the large ribosomal subunit.

It is found in the cytoplasm. Functionally, component of the large ribosomal subunit. The ribosome is a large ribonucleoprotein complex responsible for the synthesis of proteins in the cell. The polypeptide is Large ribosomal subunit protein uL14 (RPL23) (Pongo abelii (Sumatran orangutan)).